The primary structure comprises 69 residues: Large ribosomal subunit protein bL31 (69 aa).

4 residues coordinate Zn(2+): Cys-16, Cys-18, Cys-37, and Cys-40.

This sequence belongs to the bacterial ribosomal protein bL31 family. Type A subfamily. As to quaternary structure, part of the 50S ribosomal subunit. Zn(2+) serves as cofactor.

Its function is as follows. Binds the 23S rRNA. This is Large ribosomal subunit protein bL31 from Buchnera aphidicola subsp. Baizongia pistaciae (strain Bp).